A 311-amino-acid chain; its full sequence is MVVWIKGDRLHTETLEWARRHVKELERYGVTPKLAVLLLNDDPIELETQHKYVSLKARDIKSIGGEVELFELYKEPPEKREVAALKLIERLNNADDVTGILVQKPLPPYVDETKIFERLSPLKDVDGLTPENKKRLVTGFDLDRDILPCTPAGILELFRQYKIDVRGKDVVVVGKGTLVGFPLSIMLMQLDATVTVLHALSKDRKYYVRNADIIISAVGRPPELYSDNPWKLTGDFIKEGAVVVGVGGKVDPVTKKWYFDVDEKSVAEKASYLTPNIGGVGLATRARLVKNLIITSYMVATRVASPRLLAL.

174-176 contributes to the NADP(+) binding site; it reads GKG.

This sequence belongs to the tetrahydrofolate dehydrogenase/cyclohydrolase family. As to quaternary structure, homodimer.

The enzyme catalyses (6R)-5,10-methylene-5,6,7,8-tetrahydrofolate + NADP(+) = (6R)-5,10-methenyltetrahydrofolate + NADPH. The catalysed reaction is (6R)-5,10-methenyltetrahydrofolate + H2O = (6R)-10-formyltetrahydrofolate + H(+). Its pathway is one-carbon metabolism; tetrahydrofolate interconversion. Functionally, catalyzes the oxidation of 5,10-methylenetetrahydrofolate to 5,10-methenyltetrahydrofolate and then the hydrolysis of 5,10-methenyltetrahydrofolate to 10-formyltetrahydrofolate. The chain is Bifunctional protein FolD from Pyrobaculum islandicum (strain DSM 4184 / JCM 9189 / GEO3).